Here is a 151-residue protein sequence, read N- to C-terminus: Putative pre-16S rRNA nuclease (151 aa).

Belongs to the YqgF nuclease family.

It is found in the cytoplasm. Functionally, could be a nuclease involved in processing of the 5'-end of pre-16S rRNA. The polypeptide is Putative pre-16S rRNA nuclease (Prochlorococcus marinus (strain MIT 9515)).